A 205-amino-acid polypeptide reads, in one-letter code: Thymidine kinase (205 aa).

Residues 9–16 and 87–90 each bind ATP; these read SAMNAGKS and DESQ. Residue Glu-88 is the Proton acceptor of the active site. Residues Cys-145, Cys-147, Cys-182, and His-185 each contribute to the Zn(2+) site.

It belongs to the thymidine kinase family. In terms of assembly, homotetramer.

The protein localises to the cytoplasm. The enzyme catalyses thymidine + ATP = dTMP + ADP + H(+). The protein is Thymidine kinase of Salmonella choleraesuis (strain SC-B67).